Reading from the N-terminus, the 524-residue chain is MIGEQYTSIITGFKSALAVSCIAVSLFLLSPWIAYARLPSSIKSPIKAKGPLSALRACLNEISAGAKTSTRGYELYSKKGQSFAMLNINFRPQVILPPEHVRWLVTQPEDILSHAKASDDADALGYIWPLFDASALHSFSKVLQIDLTRNVTQTEKDVLEEVQHIMDELVGQTESWKEVNMVQAFERIMYQATQRVYVGLPLCRDSTYMGYVKGYARSLGTAMVFAAQLTPWPLRQVTALLAGLPVYYYVLRVRSYLSPLFKERMERLKEKGGTQDDNLEGEPRNLITWMSDGVLSGVGPKSISPSEMVTWLGILALLPTDNLWTTCTNVLLDLLSSESEHAYLHTIREEARTVFASSKESGKPVSHGLHHIDSAIRESLRMNSLSPRSLHRQVVRRGGVVLPDGQKVPTGTWLCVLSGNIQRDEDYYEDAQTYKPFRFVPKLTEAGGDKAPLLPLTNEKYLTFGYGRHACPGRWFSFQVMKIVIAYILANYDIQPLEKRPDNIVFADLNIPHLSHIIRIKRMT.

The helical transmembrane segment at 16–36 threads the bilayer; the sequence is ALAVSCIAVSLFLLSPWIAYA. Asn-150 carries N-linked (GlcNAc...) asparagine glycosylation. Cys-471 is a heme binding site.

The protein belongs to the cytochrome P450 family. Requires heme as cofactor.

Its subcellular location is the membrane. The protein operates within secondary metabolite biosynthesis. Functionally, cytochrome P450 monooxygenase; part of the lna gene cluster that mediates the biosynthesis of diastereomeric piperazines. Lna and lnb clusters encode sets of enzymes that produce overlapping sets of previously undescribed metabolites such as piperazinomycin-like metabolites or morpholine. The lna and lnb biosynthetic pathways appear to be part of a signaling network that controls the formation of sclerotia, a resilient overwintering structure. One primary function of the non-canonical nonribosomal peptide synthetases lnaA and lnbA consists in the reduction of L-tyrosine. The presence in the clusters of tailoring enzymes such as the oxidoreductases lnaB, lnbB, lnaE or lnbE, as well as of the cytochrome P450 monooxygenases lnaC, lnaD, or lnbC, might explain formation of various diastereomeric piperazines. The sequence is that of Cytochrome P450 monooxygenase lnaC from Aspergillus flavus (strain ATCC 200026 / FGSC A1120 / IAM 13836 / NRRL 3357 / JCM 12722 / SRRC 167).